The chain runs to 57 residues: Large ribosomal subunit protein uL30 (57 aa).

Belongs to the universal ribosomal protein uL30 family. As to quaternary structure, part of the 50S ribosomal subunit.

In Buchnera aphidicola subsp. Cinara cedri (strain Cc), this protein is Large ribosomal subunit protein uL30.